A 107-amino-acid polypeptide reads, in one-letter code: UPF0060 membrane protein Sala_0701 (107 aa).

The next 4 helical transmembrane spans lie at 4–24 (FAYIGAALAEIAGCFAFWAWL), 30–50 (VWWVVPGIASLALFAYLLTLV), 60–80 (AAYGGVYIAAALLWLWAVEGA), and 87–107 (LIGAAVCLGGAAIILFGPRGG).

It belongs to the UPF0060 family.

It localises to the cell inner membrane. In Sphingopyxis alaskensis (strain DSM 13593 / LMG 18877 / RB2256) (Sphingomonas alaskensis), this protein is UPF0060 membrane protein Sala_0701.